A 404-amino-acid polypeptide reads, in one-letter code: Putative nitronate monooxygenase (404 aa).

41–43 is an FMN binding site; that stretch reads PMA. The active-site Proton acceptor is the His224. Residue His224 coordinates substrate. FMN contacts are provided by residues 270 to 272 and 293 to 294; these read AGG and GT.

This sequence belongs to the nitronate monooxygenase family. NMO class I subfamily. FMN serves as cofactor.

It localises to the cytoplasm. The enzyme catalyses ethylnitronate + O2 = chemical entity + acetaldehyde + nitrite + H(+). Functionally, catalyzes the oxidation of alkyl nitronates to produce the corresponding carbonyl compounds and nitrites. This chain is Putative nitronate monooxygenase, found in Saccharomyces cerevisiae (strain ATCC 204508 / S288c) (Baker's yeast).